We begin with the raw amino-acid sequence, 316 residues long: Endochitinase 2 (316 aa).

The N-terminal stretch at 1-18 (EFTTLFLLFSVLLLSASA) is a signal peptide. Residues 19-60 (EQCGSQAGGALCASGLCCSKFGWCGNTNDYCGPGNCQSQCPG) enclose the Chitin-binding type-1 domain. 7 disulfides stabilise this stretch: Cys21–Cys36, Cys30–Cys42, Cys35–Cys49, Cys54–Cys58, Cys87–Cys150, Cys162–Cys170, and Cys269–Cys301. Catalysis depends on Glu132, which acts as the Proton donor. The propeptide at 310–316 (GLLVDTV) is removed in mature form, vacuolar targeting.

It belongs to the glycosyl hydrolase 19 family. Chitinase class I subfamily.

The protein resides in the vacuole. It catalyses the reaction Random endo-hydrolysis of N-acetyl-beta-D-glucosaminide (1-&gt;4)-beta-linkages in chitin and chitodextrins.. In terms of biological role, defense against chitin-containing fungal pathogens. This chain is Endochitinase 2 (CHTB2), found in Solanum tuberosum (Potato).